We begin with the raw amino-acid sequence, 385 residues long: Torsin-3A (385 aa).

The N-terminal stretch at 1–21 is a signal peptide; that stretch reads MFLGALWLLLLLPLRPPGAQG. N110 carries N-linked (GlcNAc...) asparagine glycosylation. 155 to 162 contributes to the ATP binding site; sequence GWSGTGKN.

This sequence belongs to the ClpA/ClpB family. Torsin subfamily. Interacts with TOR1AIP1. In terms of processing, N-glycosylated.

It localises to the cytoplasm. Its subcellular location is the endoplasmic reticulum lumen. The chain is Torsin-3A (Tor3a) from Mus musculus (Mouse).